The following is a 405-amino-acid chain: POC1 centriolar protein homolog A (405 aa).

WD repeat units follow at residues 17–56 (GHRDAVTCVDFSLNTKHLASGSMDSTLMIWHMKPQSRAYR), 59–98 (GHKDAVTCVNFSPSGHLLASGSRDKTVRIWVPNVKGESTV), 101–140 (AHTATVRSVHFCSDGQSLVTASDDKTVKVWSTHRQRFLFS), 143–182 (QHINWVRCAKFSPDGRLIVSASDDKTVKLWDKTSRECIHS), 185–224 (EHGGFVTYVDFHPSGTCIAAAGMDNTVKVWDARTHRLLQH), 227–266 (LHSAAVNALSFHPSGNYLITASSDSTLKILDLMEGRLLYT), and 269–308 (GHQGPATTVAFSRTGEYFASGGSDEQVMVWKSNFDIVDYG). The tract at residues 313–352 (RRPPPLTSSSGTLPKMDLPVPPGRDRSLESVQGEPQESIS) is disordered. The span at 341–352 (ESVQGEPQESIS) shows a compositional bias: polar residues. A coiled-coil region spans residues 367-395 (QLDILTQTVSILEQRLTLTEDRLKQCLEN).

The protein belongs to the WD repeat POC1 family. As to quaternary structure, interacts with POC1B. In terms of tissue distribution, widely expressed in embryonic and adult tissues.

Its subcellular location is the cytoplasm. The protein localises to the cytoskeleton. It localises to the microtubule organizing center. The protein resides in the centrosome. It is found in the centriole. Its subcellular location is the cilium basal body. The protein localises to the spindle pole. In terms of biological role, plays an important role in centriole assembly and/or stability and ciliogenesis. Involved in early steps of centriole duplication, as well as in the later steps of centriole length control. Acts in concert with POC1B to ensure centriole integrity and proper mitotic spindle formation. This Mus musculus (Mouse) protein is POC1 centriolar protein homolog A (Poc1a).